Reading from the N-terminus, the 561-residue chain is MSSVAITICILSLVASLGLWLGNIKIRGVGLSIGGVLFGGIIISHIMNLPTVASFMQQKNIVLDSQTLYFVQEFGLILFVYTIGIQVGPGFFASLRSSGLKLNAFAALIVLLGGLCSVILYYLFSIPLPAILGILSGAVTNTPSLGAGKQIIAELGGEQMTELMGMGYAIAYPFGIIGVLLAMWLIRLIFKIRPERELQFFDKEQQRQKGLAGINIRITNPNINNILLREIPDYDLNTVIYSRLKRNDELIIPHPNTTLYLNDILHLVGNKKSLNKMQIILGEEAGHEPLNSGDSPIKNERAVVTNEQVCGKKLAQLQIQSQYDVVISRINRAGVELIPSDEMALQFGDVLHLVGRQKNIATVLSLIGNAQQKLQQVQMLPVFIGIGLGVLLGSIPIYLPGFPVALKLGLAGGPLVVALVLARIGSIGKLYWFMPPSANLALREIGIVLFLSVIGIHAGEHFFSTLLSKDGFSWICYGAIITLLPLLIAGIIARYYSKMNYLTICGLLAGAMTDTPALAFANAIQENNGASVLAYATVYPLTTFLRIMLPQLIAVLLWAAH.

Transmembrane regions (helical) follow at residues 4 to 24, 29 to 49, 74 to 94, 104 to 124, and 166 to 186; these read VAIT…LGNI, VGLS…IMNL, FGLI…FFAS, AFAA…YYLF, and MGYA…MWLI. RCK C-terminal domains follow at residues 198–283 and 285–369; these read LQFF…ILGE and AGHE…LIGN. 6 helical membrane-spanning segments follow: residues 379–399, 411–433, 447–467, 472–492, 501–521, and 538–558; these read MLPV…PIYL, AGGP…LYWF, IVLF…STLL, FSWI…AGII, YLTI…LAFA, and VYPL…VLLW.

This sequence belongs to the AAE transporter (TC 2.A.81) family. YidE subfamily.

Its subcellular location is the cell membrane. The sequence is that of Putative transport protein DNO_0009 from Dichelobacter nodosus (strain VCS1703A).